We begin with the raw amino-acid sequence, 51 residues long: Cytochrome bd ubiquinol oxidase subunit X (51 aa).

Over 1–3 (MWY) the chain is Cytoplasmic. Residues 4–26 (FSWLLGLPLAAAFAVLNAMWYEL) traverse the membrane as a helical segment. Topologically, residues 27-51 (MDDRARKRLAADPTAELALEGNKHH) are periplasmic.

Belongs to the cytochrome ubiquinol oxidase subunit X family. May be a subunit of cytochrome ubiquinol oxidase.

Its subcellular location is the cell inner membrane. The catalysed reaction is 2 a ubiquinol + O2(in) + 4 H(+)(in) = 2 a ubiquinone + 2 H2O(in) + 4 H(+)(out). It participates in energy metabolism; oxidative phosphorylation. Required for correct functioning of cytochrome bd oxidase. This is Cytochrome bd ubiquinol oxidase subunit X (cydX) from Brucella abortus (strain 2308).